The sequence spans 342 residues: Ferredoxin--NADP reductase (342 aa).

Residues C17, D36, Q44, Y49, V89, F124, D289, and T330 each contribute to the FAD site.

This sequence belongs to the ferredoxin--NADP reductase type 2 family. Homodimer. FAD is required as a cofactor.

It catalyses the reaction 2 reduced [2Fe-2S]-[ferredoxin] + NADP(+) + H(+) = 2 oxidized [2Fe-2S]-[ferredoxin] + NADPH. The protein is Ferredoxin--NADP reductase of Nitrobacter hamburgensis (strain DSM 10229 / NCIMB 13809 / X14).